The primary structure comprises 195 residues: MEGVDNTNPMLTLEEGENNNPFSSLDDKTLMMMAPSLIFSGDVGPSSSSCTPAGYHLSAQLENFRGGGGEMGGLVSNNSNNSDHNKNCNKGKGKRTLAMQRIAFHTRSDDDVLDDGYRWRKYGQKSVKNNAHPRSYYRCTYHTCNVKKQVQRLAKDPNVVVTTYEGVHNHPCEKLMETLSPLLRQLQFLSRVSDL.

Residues M1 to M10 are compositionally biased toward polar residues. Disordered stretches follow at residues M1–N20 and E70–G93. A DNA-binding region (WRKY) is located at residues S108–E173.

This sequence belongs to the WRKY group II-c family.

Its subcellular location is the nucleus. Transcription factor. Interacts specifically with the W box (5'-(T)TGAC[CT]-3'), a frequently occurring elicitor-responsive cis-acting element. This is Probable WRKY transcription factor 56 (WRKY56) from Arabidopsis thaliana (Mouse-ear cress).